The chain runs to 202 residues: MKALTARQQEVFDLIRDHISQTGMPPTRAEIAQRLGFRSPNAAEEHLKALARKGVIEIVSGASRGIRLLQEEEEGLPLVGRVAAGEPLLAQQHIEGHYQVDPSLFKPNADFLLRVSGMSMKDIGIMDGDLLAVHKTQDVRNGQVVVARIDDEVTVKRLKKQGNKVELLPENSEFKPIVVDLRQQSFTIEGLAVGVIRNGDWL.

Residues Arg-28–Lys-48 constitute a DNA-binding region (H-T-H motif). Active-site for autocatalytic cleavage activity residues include Ser-119 and Lys-156.

Belongs to the peptidase S24 family. Homodimer.

The catalysed reaction is Hydrolysis of Ala-|-Gly bond in repressor LexA.. Represses a number of genes involved in the response to DNA damage (SOS response), including recA and lexA. Binds to the 16 bp palindromic sequence 5'-CTGTATATATATACAG-3'. In the presence of single-stranded DNA, RecA interacts with LexA causing an autocatalytic cleavage which disrupts the DNA-binding part of LexA, leading to derepression of the SOS regulon and eventually DNA repair. This Escherichia coli (strain K12 / MC4100 / BW2952) protein is LexA repressor.